A 217-amino-acid chain; its full sequence is Small ribosomal subunit protein uS3 (217 aa).

Positions 40–110 (IRDLINKGFN…EVYINIHEVR (71 aa)) constitute a KH type-2 domain.

The protein belongs to the universal ribosomal protein uS3 family. In terms of assembly, part of the 30S ribosomal subunit. Forms a tight complex with proteins S10 and S14.

Its function is as follows. Binds the lower part of the 30S subunit head. Binds mRNA in the 70S ribosome, positioning it for translation. This Rickettsia felis (strain ATCC VR-1525 / URRWXCal2) (Rickettsia azadi) protein is Small ribosomal subunit protein uS3.